Here is a 572-residue protein sequence, read N- to C-terminus: Dihydroxy-acid dehydratase (572 aa).

[2Fe-2S] cluster is bound at residue Cys-57. Residue Asp-89 coordinates Mg(2+). [2Fe-2S] cluster is bound at residue Cys-130. Residues Asp-131 and Lys-132 each contribute to the Mg(2+) site. An N6-carboxylysine modification is found at Lys-132. Cys-202 contacts [2Fe-2S] cluster. Mg(2+) is bound at residue Glu-453. Catalysis depends on Ser-479, which acts as the Proton acceptor.

Belongs to the IlvD/Edd family. Homodimer. The cofactor is [2Fe-2S] cluster. It depends on Mg(2+) as a cofactor.

The catalysed reaction is (2R)-2,3-dihydroxy-3-methylbutanoate = 3-methyl-2-oxobutanoate + H2O. It catalyses the reaction (2R,3R)-2,3-dihydroxy-3-methylpentanoate = (S)-3-methyl-2-oxopentanoate + H2O. It participates in amino-acid biosynthesis; L-isoleucine biosynthesis; L-isoleucine from 2-oxobutanoate: step 3/4. It functions in the pathway amino-acid biosynthesis; L-valine biosynthesis; L-valine from pyruvate: step 3/4. Functions in the biosynthesis of branched-chain amino acids. Catalyzes the dehydration of (2R,3R)-2,3-dihydroxy-3-methylpentanoate (2,3-dihydroxy-3-methylvalerate) into 2-oxo-3-methylpentanoate (2-oxo-3-methylvalerate) and of (2R)-2,3-dihydroxy-3-methylbutanoate (2,3-dihydroxyisovalerate) into 2-oxo-3-methylbutanoate (2-oxoisovalerate), the penultimate precursor to L-isoleucine and L-valine, respectively. The polypeptide is Dihydroxy-acid dehydratase (Streptococcus thermophilus (strain CNRZ 1066)).